The sequence spans 127 residues: Fluoride-specific ion channel FluC 1 (127 aa).

3 consecutive transmembrane segments (helical) span residues 6-26, 29-49, and 95-115; these read PLVTVETIVLVGLGGFAGSNL, FVGLFFPGLQGTLLVNVCGSF, and EWAVANVVGSYALGFAGVLVG.

Belongs to the fluoride channel Fluc/FEX (TC 1.A.43) family.

The protein resides in the cell membrane. The enzyme catalyses fluoride(in) = fluoride(out). In terms of biological role, fluoride-specific ion channel. Important for reducing fluoride concentration in the cell, thus reducing its toxicity. The polypeptide is Fluoride-specific ion channel FluC 1 (Haloarcula marismortui (strain ATCC 43049 / DSM 3752 / JCM 8966 / VKM B-1809) (Halobacterium marismortui)).